Reading from the N-terminus, the 470-residue chain is Tigger transposable element-derived protein 3 (470 aa).

Residues 3 to 55 form the HTH psq-type domain; sequence LNTKKKLHALSLAEKIQVLELLDESKMSQSEVARRFQVSQPQISRICKNKEKL. 2 consecutive DNA-binding regions (H-T-H motif) follow at residues 31-51 and 100-130; these read QSEV…ICKN and PMLL…WKRR. One can recognise an HTH CENPB-type domain in the interval 67 to 137; the sequence is ERKRKRESKY…KRRNNVGFGT (71 aa). The DDE-1 domain maps to 167-360; the sequence is FSPEDVFGCA…VPRQLILSSF (194 aa). The span at 402 to 421 shows a compositional bias: basic and acidic residues; it reads DPGPRVCKEETGTEDSGREE. The interval 402–426 is disordered; sequence DPGPRVCKEETGTEDSGREEDGFEP.

Belongs to the tigger transposable element derived protein family.

It localises to the nucleus. This is Tigger transposable element-derived protein 3 (Tigd3) from Mus musculus (Mouse).